Consider the following 300-residue polypeptide: Dihydroorotate dehydrogenase B (NAD(+)), catalytic subunit (300 aa).

FMN is bound by residues Ser-21 and 45–46 (KG). Residues Lys-45 and 69 to 73 (NSIGL) contribute to the substrate site. Residues Asn-99 and Asn-126 each coordinate FMN. A substrate-binding site is contributed by Asn-126. Residue Cys-129 is the Nucleophile of the active site. 2 residues coordinate FMN: Lys-164 and Val-190. Residue 191–192 (NT) coordinates substrate. FMN is bound by residues Gly-216, 242-243 (GG), and 264-265 (GT).

The protein belongs to the dihydroorotate dehydrogenase family. Type 1 subfamily. In terms of assembly, heterotetramer of 2 PyrK and 2 PyrD type B subunits. The cofactor is FMN.

The protein resides in the cytoplasm. The catalysed reaction is (S)-dihydroorotate + NAD(+) = orotate + NADH + H(+). It participates in pyrimidine metabolism; UMP biosynthesis via de novo pathway; orotate from (S)-dihydroorotate (NAD(+) route): step 1/1. Catalyzes the conversion of dihydroorotate to orotate with NAD(+) as electron acceptor. The sequence is that of Dihydroorotate dehydrogenase B (NAD(+)), catalytic subunit (pyrD) from Petrotoga mobilis (strain DSM 10674 / SJ95).